Reading from the N-terminus, the 72-residue chain is Large ribosomal subunit protein bL31 (72 aa).

Zn(2+) is bound by residues Cys16, Cys18, Cys36, and Cys39.

Belongs to the bacterial ribosomal protein bL31 family. Type A subfamily. As to quaternary structure, part of the 50S ribosomal subunit. Requires Zn(2+) as cofactor.

Binds the 23S rRNA. This Geobacter sp. (strain M21) protein is Large ribosomal subunit protein bL31.